A 327-amino-acid chain; its full sequence is Ribosomal RNA small subunit methyltransferase H (327 aa).

Residues 41 to 43, D60, Y87, D108, and Q115 each bind S-adenosyl-L-methionine; that span reads GGH. The segment at 292 to 327 is disordered; sequence AERADEQETLENPRAASARLRAVERLRETTTPGSAR.

Belongs to the methyltransferase superfamily. RsmH family.

It localises to the cytoplasm. It catalyses the reaction cytidine(1402) in 16S rRNA + S-adenosyl-L-methionine = N(4)-methylcytidine(1402) in 16S rRNA + S-adenosyl-L-homocysteine + H(+). Specifically methylates the N4 position of cytidine in position 1402 (C1402) of 16S rRNA. In Kocuria rhizophila (strain ATCC 9341 / DSM 348 / NBRC 103217 / DC2201), this protein is Ribosomal RNA small subunit methyltransferase H.